The sequence spans 377 residues: Nitric oxide reductase FlRd-NAD(+) reductase (377 aa).

Belongs to the FAD-dependent oxidoreductase family. FAD is required as a cofactor.

The protein resides in the cytoplasm. The enzyme catalyses 2 reduced [nitric oxide reductase rubredoxin domain] + NAD(+) + H(+) = 2 oxidized [nitric oxide reductase rubredoxin domain] + NADH. Its pathway is nitrogen metabolism; nitric oxide reduction. Functionally, one of at least two accessory proteins for anaerobic nitric oxide (NO) reductase. Reduces the rubredoxin moiety of NO reductase. The protein is Nitric oxide reductase FlRd-NAD(+) reductase of Escherichia fergusonii (strain ATCC 35469 / DSM 13698 / CCUG 18766 / IAM 14443 / JCM 21226 / LMG 7866 / NBRC 102419 / NCTC 12128 / CDC 0568-73).